Here is a 200-residue protein sequence, read N- to C-terminus: ATP-dependent Clp protease proteolytic subunit (200 aa).

The Nucleophile role is filled by serine 103. The active site involves histidine 128.

The protein belongs to the peptidase S14 family. As to quaternary structure, fourteen ClpP subunits assemble into 2 heptameric rings which stack back to back to give a disk-like structure with a central cavity, resembling the structure of eukaryotic proteasomes.

The protein resides in the cytoplasm. It carries out the reaction Hydrolysis of proteins to small peptides in the presence of ATP and magnesium. alpha-casein is the usual test substrate. In the absence of ATP, only oligopeptides shorter than five residues are hydrolyzed (such as succinyl-Leu-Tyr-|-NHMec, and Leu-Tyr-Leu-|-Tyr-Trp, in which cleavage of the -Tyr-|-Leu- and -Tyr-|-Trp bonds also occurs).. Cleaves peptides in various proteins in a process that requires ATP hydrolysis. Has a chymotrypsin-like activity. Plays a major role in the degradation of misfolded proteins. This Vibrio cholerae serotype O1 (strain ATCC 39541 / Classical Ogawa 395 / O395) protein is ATP-dependent Clp protease proteolytic subunit.